The primary structure comprises 416 residues: Neamine transaminase NeoN (416 aa).

Position 231 is an N6-(pyridoxal phosphate)lysine (lysine 231).

The protein belongs to the class-III pyridoxal-phosphate-dependent aminotransferase family. Requires pyridoxal 5'-phosphate as cofactor.

It catalyses the reaction neomycin C + 2-oxoglutarate = 6'''-deamino-6'''-oxoneomycin C + L-glutamate. It carries out the reaction neamine + 2-oxoglutarate = 6'-oxoparomamine + L-glutamate. It participates in antibiotic biosynthesis; neomycin biosynthesis. Functionally, 6'-oxoglucosaminyl:L-glutamate aminotransferase that catalyzes pyridoxal-5'-phosphate-mediated transamination for the conversion of paromamine to neamine in the biosynthetic pathway of neomycin. Also able to catalyze deamination at C-6''' of neomycin. This Streptomyces fradiae (Streptomyces roseoflavus) protein is Neamine transaminase NeoN (neoN).